A 306-amino-acid chain; its full sequence is Pantothenate kinase (306 aa).

ATP is bound at residue 91 to 98; it reads GSVAVGKS.

Belongs to the prokaryotic pantothenate kinase family.

The protein resides in the cytoplasm. It catalyses the reaction (R)-pantothenate + ATP = (R)-4'-phosphopantothenate + ADP + H(+). It participates in cofactor biosynthesis; coenzyme A biosynthesis; CoA from (R)-pantothenate: step 1/5. This is Pantothenate kinase from Streptococcus thermophilus (strain CNRZ 1066).